The sequence spans 25 residues: C-reactive protein P2 subunit 4 (25 aa).

Positions 1-25 (GRSLVFPEETANSFVELFPAKELSL) constitute a Pentraxin (PTX) domain.

It belongs to the pentraxin family. In terms of assembly, heteropentamer. Discoid arrangement of 5 non-covalently bound subunits 1, 2, 3 and 4. It depends on Ca(2+) as a cofactor. Post-translationally, glycosylated.

The protein localises to the secreted. In terms of biological role, displays several functions associated with host defense: it promotes agglutination, bacterial capsular swelling, phagocytosis, and complement fixation through its calcium-dependent binding to phosphorylcholine. The chain is C-reactive protein P2 subunit 4 from Gadus morhua (Atlantic cod).